The chain runs to 67 residues: Guanine nucleotide-binding protein G(I)/G(S)/G(O) subunit gamma-13 (67 aa).

Cysteine methyl ester is present on cysteine 64. A lipid anchor (S-farnesyl cysteine) is attached at cysteine 64. Residues 65 to 67 (TIL) constitute a propeptide, removed in mature form.

The protein belongs to the G protein gamma family. G proteins are composed of 3 units, alpha, beta and gamma.

The protein localises to the cell membrane. Its function is as follows. Guanine nucleotide-binding proteins (G proteins) are involved as a modulator or transducer in various transmembrane signaling systems. The beta and gamma chains are required for the GTPase activity, for replacement of GDP by GTP, and for G protein-effector interaction. This chain is Guanine nucleotide-binding protein G(I)/G(S)/G(O) subunit gamma-13 (Gng13), found in Mus musculus (Mouse).